Consider the following 419-residue polypeptide: UDP-N-acetylglucosamine 1-carboxyvinyltransferase (419 aa).

22-23 (KN) is a binding site for phosphoenolpyruvate. Residue arginine 95 participates in UDP-N-acetyl-alpha-D-glucosamine binding. Residue cysteine 119 is the Proton donor of the active site. The residue at position 119 (cysteine 119) is a 2-(S-cysteinyl)pyruvic acid O-phosphothioketal. UDP-N-acetyl-alpha-D-glucosamine-binding positions include 164 to 167 (KVSV), aspartate 308, and isoleucine 330.

The protein belongs to the EPSP synthase family. MurA subfamily.

The protein resides in the cytoplasm. It carries out the reaction phosphoenolpyruvate + UDP-N-acetyl-alpha-D-glucosamine = UDP-N-acetyl-3-O-(1-carboxyvinyl)-alpha-D-glucosamine + phosphate. Its pathway is cell wall biogenesis; peptidoglycan biosynthesis. Cell wall formation. Adds enolpyruvyl to UDP-N-acetylglucosamine. This chain is UDP-N-acetylglucosamine 1-carboxyvinyltransferase, found in Rickettsia africae (strain ESF-5).